Consider the following 154-residue polypeptide: MEATRFTFNTATLCSAQHCNCHKLTTKASGMPVQPPVWRPWIVTERDILRRNAIRERRSKPYARPSSTSNGSTRGPEPGPTSFQHPVKLHWSKPVYDYMYQYGKQLLDAFPVQATICIVDEDPAQSDDSDFESDYEDDSDTDYKPLKRNAPILN.

The WRPW motif motif lies at 38-41 (WRPW). Disordered stretches follow at residues 54–86 (IRER…FQHP) and 121–154 (EDPA…PILN). The tract at residues 85–119 (HPVKLHWSKPVYDYMYQYGKQLLDAFPVQATICIV) is ripply homology domain. A compositionally biased stretch (acidic residues) spans 121 to 140 (EDPAQSDDSDFESDYEDDSD).

It belongs to the ripply family. In the late gastrula stage, expression appears in the dorsal presomitic mesoderm and in the first three pairs of nascent somites. Expressed strongly in forming somites and then expression is rapidly down-regulated except in the first somite pair where expression is maintained for a longer period. Also expressed in the presumptive notochord and in the tail bud at the 48 hour larval stage. Expression disappears by the 72 hour stage.

The protein localises to the nucleus. Functionally, may play a role in somitogenesis. This Branchiostoma belcheri (Amphioxus) protein is Protein ripply.